The primary structure comprises 825 residues: NT-3 growth factor receptor (825 aa).

The first 31 residues, 1–31 (MDVSLCPAKCSFWRIFLLGSVWLDYVGSVLA), serve as a signal peptide directing secretion. 2 disulfides stabilise this stretch: Cys-32–Cys-38 and Cys-36–Cys-45. The Extracellular portion of the chain corresponds to 32-429 (CPANCVCSKT…TVTHKPEEDT (398 aa)). N-linked (GlcNAc...) asparagine glycosylation is found at Asn-68, Asn-72, and Asn-79. 2 LRR repeats span residues 104-125 (GLQK…AFAK) and 128-149 (HLRY…LFQT). Residues Asn-133 and Asn-163 are each glycosylated (N-linked (GlcNAc...) asparagine). Positions 160–209 (NFFNCSCDIRWMQLWQEQGEAKLNSQSLYCISADGSQLPLFRMNISQCDL) constitute an LRRCT domain. 2 disulfide bridges follow: Cys-164/Cys-189 and Cys-166/Cys-207. 7 N-linked (GlcNAc...) asparagine glycosylation sites follow: Asn-203, Asn-218, Asn-232, Asn-259, Asn-267, Asn-272, and Asn-294. Ig-like C2-type domains lie at 210 to 300 (PEIS…VALT) and 309 to 382 (SLEE…NRQE). A disulfide bridge links Cys-231 with Cys-284. Cys-320 and Cys-362 are oxidised to a cystine. Residues Asn-375 and Asn-388 are each glycosylated (N-linked (GlcNAc...) asparagine). Residues 430–453 (FGVSIAVGLAAFACVLLVVLFIMI) form a helical membrane-spanning segment. At 454–825 (NKYGRRSKFG…ATPIYLDILG (372 aa)) the chain is on the cytoplasmic side. Position 516 is a phosphotyrosine; by autocatalysis (Tyr-516). The 277-residue stretch at 538 to 814 (IVLKRELGEG…EIYKILHALG (277 aa)) folds into the Protein kinase domain. ATP-binding positions include 544 to 552 (LGEGAFGKV) and Lys-572. Asp-679 serves as the catalytic Proton acceptor. Tyr-705, Tyr-709, Tyr-710, and Tyr-820 each carry phosphotyrosine; by autocatalysis.

It belongs to the protein kinase superfamily. Tyr protein kinase family. Insulin receptor subfamily. As to quaternary structure, exists in a dynamic equilibrium between monomeric (low affinity) and dimeric (high affinity) structures. Binds SH2B2. Interacts with SQSTM1 and KIDINS220. Interacts with PTPRS. Interacts with MAPK8IP3/JIP3. In terms of processing, ligand-mediated auto-phosphorylation. Preferentially in the brain, low levels in the ovaries.

It localises to the membrane. The catalysed reaction is L-tyrosyl-[protein] + ATP = O-phospho-L-tyrosyl-[protein] + ADP + H(+). Receptor tyrosine kinase involved in nervous system and probably heart development. Upon binding of its ligand NTF3/neurotrophin-3, NTRK3 autophosphorylates and activates different signaling pathways, including the phosphatidylinositol 3-kinase/AKT and the MAPK pathways, that control cell survival and differentiation. The chain is NT-3 growth factor receptor (NTRK3) from Sus scrofa (Pig).